Reading from the N-terminus, the 328-residue chain is Stress response kinase A (328 aa).

The active-site Proton acceptor is the aspartate 201. Positions 206 and 217 each coordinate Mg(2+). Aspartate 217 is a catalytic residue.

It belongs to the SrkA/RdoA protein kinase family. In terms of assembly, monomer. The cofactor is Mg(2+).

Its subcellular location is the cytoplasm. The enzyme catalyses L-seryl-[protein] + ATP = O-phospho-L-seryl-[protein] + ADP + H(+). It catalyses the reaction L-threonyl-[protein] + ATP = O-phospho-L-threonyl-[protein] + ADP + H(+). Its function is as follows. A protein kinase that phosphorylates Ser and Thr residues. Probably acts to suppress the effects of stress linked to accumulation of reactive oxygen species. Probably involved in the extracytoplasmic stress response. This Escherichia coli O157:H7 protein is Stress response kinase A.